We begin with the raw amino-acid sequence, 664 residues long: Protein-arginine deiminase type-3 (664 aa).

Belongs to the protein arginine deiminase family. The cofactor is Ca(2+). Epidermis and hair follicles.

It is found in the cytoplasm. It catalyses the reaction L-arginyl-[protein] + H2O = L-citrullyl-[protein] + NH4(+). Catalyzes the deimination of arginine residues of proteins. The protein is Protein-arginine deiminase type-3 (Padi3) of Rattus norvegicus (Rat).